The primary structure comprises 170 residues: Peptide deformylase (170 aa).

Fe cation-binding residues include cysteine 91 and histidine 133. Glutamate 134 is a catalytic residue. Histidine 137 lines the Fe cation pocket.

This sequence belongs to the polypeptide deformylase family. Fe(2+) serves as cofactor.

The catalysed reaction is N-terminal N-formyl-L-methionyl-[peptide] + H2O = N-terminal L-methionyl-[peptide] + formate. Its function is as follows. Removes the formyl group from the N-terminal Met of newly synthesized proteins. Requires at least a dipeptide for an efficient rate of reaction. N-terminal L-methionine is a prerequisite for activity but the enzyme has broad specificity at other positions. The sequence is that of Peptide deformylase from Yersinia enterocolitica serotype O:8 / biotype 1B (strain NCTC 13174 / 8081).